A 261-amino-acid polypeptide reads, in one-letter code: Serine acetyltransferase (261 aa).

This sequence belongs to the transferase hexapeptide repeat family.

Its subcellular location is the cytoplasm. It carries out the reaction L-serine + acetyl-CoA = O-acetyl-L-serine + CoA. It functions in the pathway amino-acid biosynthesis; L-cysteine biosynthesis; L-cysteine from L-serine: step 1/2. This is Serine acetyltransferase (cysE) from Buchnera aphidicola subsp. Schizaphis graminum (strain Sg).